The following is a 704-amino-acid chain: Elongation factor G (704 aa).

The region spanning 8–291 is the tr-type G domain; the sequence is DRVRNIGIMA…AVIDYLASPV (284 aa). GTP contacts are provided by residues 17–24, 90–94, and 144–147; these read AHIDAGKT, DTPGH, and NKMD.

The protein belongs to the TRAFAC class translation factor GTPase superfamily. Classic translation factor GTPase family. EF-G/EF-2 subfamily.

It is found in the cytoplasm. Its function is as follows. Catalyzes the GTP-dependent ribosomal translocation step during translation elongation. During this step, the ribosome changes from the pre-translocational (PRE) to the post-translocational (POST) state as the newly formed A-site-bound peptidyl-tRNA and P-site-bound deacylated tRNA move to the P and E sites, respectively. Catalyzes the coordinated movement of the two tRNA molecules, the mRNA and conformational changes in the ribosome. The protein is Elongation factor G of Chlorobaculum tepidum (strain ATCC 49652 / DSM 12025 / NBRC 103806 / TLS) (Chlorobium tepidum).